The following is a 693-amino-acid chain: Guanyl-specific ribonuclease pgl-3 (693 aa).

The segment at lysine 205–lysine 447 is involved in dimerization. Histidine 437 functions as the Proton acceptor in the catalytic mechanism. 3 disordered regions span residues leucine 445–threonine 468, alanine 523–proline 591, and serine 620–serine 693. Over residues lysine 447–threonine 468 the composition is skewed to low complexity. Composition is skewed to polar residues over residues asparagine 528–lysine 548 and isoleucine 569–threonine 580. Residues glycine 581–glycine 614 are required for interaction with sepa-1. Gly residues-rich tracts occupy residues serine 625–arginine 634, arginine 641–tyrosine 660, and arginine 668–serine 693. The tract at residues glycine 633–serine 693 is RNA-binding RGG-box.

In terms of assembly, may form a homodimer. Interacts with pgl-1 and pgl-2; this association is not required for P-granule localization of either pgl-1 or pgl-2. Interacts with sepa-1; the interaction is enhanced in the presence of RNA. Interacts with prmt-1; the interaction is direct. In terms of processing, methylated at arginine residues in the RNA-binding RGG-box by prmt-1. Methylation promotes P-granule degradation by autophagy. As to expression, highly expressed in the germline. Expressed in most somatic cells.

The protein localises to the cytoplasmic granule. The catalysed reaction is [RNA] containing guanosine + H2O = an [RNA fragment]-3'-guanosine-3'-phosphate + a 5'-hydroxy-ribonucleotide-3'-[RNA fragment].. In terms of biological role, guanyl-specific endoribonuclease which cleaves the phosphodiester bond in single-stranded RNA between the 3'-guanylic residue and the 5'-OH residue of adjacent nucleotide, resulting in the formation of a corresponding 2',3'-cyclic phosphate intermediate. P-granule component involved in germline development. Together with the P-granule component pgl-1, is involved in the formation of P-granules. Together with pgl-1, probably recruits other granule components such as pos-1, mex-3 and glh-1, and RNA to P-granules. In vitro, binds mRNA; this interaction is required for the formation of liquid-like droplets that resemble P-granules. Most likely recruits pgl-1 into P-granules during autophagy. Associates with adapters such as sepa-1 and is required for the accumulation and degradation of P-granules by autophagy in somatic cells. This ensures exclusive localization of the P-granules in germ cells. In addition, may act redundantly with pgl-1 to protect germ cells from excessive germline apoptosis during normal oogenesis and development of the two gonadal arms. This may in part be through regulating the localization of sir-2.1 which is involved in germ cell apoptosis. May protect somatic cells from excessive apoptosis during normal development. This is Guanyl-specific ribonuclease pgl-3 from Caenorhabditis elegans.